We begin with the raw amino-acid sequence, 522 residues long: Alanine aminotransferase 2 (522 aa).

Lys-340 carries the N6-(pyridoxal phosphate)lysine modification. An N6-acetyllysine mark is found at Lys-414, Lys-504, and Lys-511.

This sequence belongs to the class-I pyridoxal-phosphate-dependent aminotransferase family. Alanine aminotransferase subfamily. As to quaternary structure, homodimer. It depends on pyridoxal 5'-phosphate as a cofactor. Specifically induced in fatty liver. Highly expressed in muscle, liver and white adipose tissue. Moderately expressed in brain and kidney and expressed at low levels in the heart.

The enzyme catalyses L-alanine + 2-oxoglutarate = pyruvate + L-glutamate. It participates in amino-acid degradation; L-alanine degradation via transaminase pathway; pyruvate from L-alanine: step 1/1. Catalyzes the reversible transamination between alanine and 2-oxoglutarate to form pyruvate and glutamate. The chain is Alanine aminotransferase 2 (Gpt2) from Mus musculus (Mouse).